A 150-amino-acid polypeptide reads, in one-letter code: Retinal rod rhodopsin-sensitive cGMP 3',5'-cyclic phosphodiesterase subunit delta (150 aa).

The segment at 144–150 is required for association with membranes; the sequence is RVRLFYV.

Belongs to the PDE6D/unc-119 family. Interacts with the prenylated catalytic subunits of PDE6, an oligomer composed of two catalytic chains (PDE6A and PDE6B) and two inhibitory chains (gamma); has no effect on enzyme activity but promotes the release of the prenylated enzyme from cell membrane. Interacts with prenylated GRK1 and GRK7. Interacts with prenylated INPP5E. Interacts with prenylated Ras family members, including HRAS, KRAS, NRAS, RAP2A, RAP2C and RHEB. Interacts with RAB13 (prenylated form); dissociates RAB13 from membranes. Interacts with RAB28 (prenylated form); the interaction promotes RAB28 delivery to the photoreceptor outer segments. Interacts with RPGR. Interacts with ARL2. Interacts with ARL3; the interaction occurs specifically with the GTP-bound form of ARL3. Interaction with ARL2 and ARL3 promotes release of farnesylated cargo proteins. In terms of tissue distribution, detected in retina photoreceptor cells, especially in rods (at protein level). Detected in retina, brain and adrenal gland.

It is found in the cytoplasm. The protein localises to the cytosol. It localises to the cytoplasmic vesicle membrane. Its subcellular location is the cytoskeleton. The protein resides in the cilium basal body. Functionally, promotes the release of prenylated target proteins from cellular membranes. Modulates the activity of prenylated or palmitoylated Ras family members by regulating their subcellular location. Required for normal ciliary targeting of farnesylated target proteins, such as INPP5E. Modulates the subcellular location of target proteins by acting as a GTP specific dissociation inhibitor (GDI). Required for RAB28 localization to the cone cell outer segments in the retina. Increases the affinity of ARL3 for GTP by several orders of magnitude. Stabilizes ARL3-GTP by decreasing the nucleotide dissociation rate. In Bos taurus (Bovine), this protein is Retinal rod rhodopsin-sensitive cGMP 3',5'-cyclic phosphodiesterase subunit delta (PDE6D).